Consider the following 463-residue polypeptide: Glutamate--tRNA ligase 2 (463 aa).

The short motif at 10-20 (PSPTGFLHIGS) is the 'HIGH' region element. Residues 239–243 (KLSKR) carry the 'KMSKS' region motif. Lys242 serves as a coordination point for ATP.

Belongs to the class-I aminoacyl-tRNA synthetase family. Glutamate--tRNA ligase type 1 subfamily. As to quaternary structure, monomer.

The protein localises to the cytoplasm. It catalyses the reaction tRNA(Glu) + L-glutamate + ATP = L-glutamyl-tRNA(Glu) + AMP + diphosphate. Functionally, catalyzes the attachment of glutamate to tRNA(Glu) in a two-step reaction: glutamate is first activated by ATP to form Glu-AMP and then transferred to the acceptor end of tRNA(Glu). The sequence is that of Glutamate--tRNA ligase 2 from Rickettsia akari (strain Hartford).